Here is a 268-residue protein sequence, read N- to C-terminus: Protein CDV3 homolog (268 aa).

The segment covering 40–50 (KREVVKPKKPE) has biased composition (basic and acidic residues). Disordered stretches follow at residues 40–145 (KREV…ERVG) and 184–268 (QQAG…DEAS). Over residues 51 to 61 (AAAGGVAVVGE) the composition is skewed to low complexity. Residues 76 to 85 (VEEEWKEFEE) are compositionally biased toward acidic residues. Over residues 98–107 (QLSTITAQES) the composition is skewed to polar residues. Positions 123–132 (NYDEDDEDSN) are enriched in acidic residues. Basic and acidic residues predominate over residues 221–239 (RPEEQRKKKNEPAFEEVRH).

Belongs to the CDV3 family.

This is Protein CDV3 homolog from Drosophila yakuba (Fruit fly).